The primary structure comprises 456 residues: tRNA modification GTPase MnmE (456 aa).

Arg24, Glu81, and Lys120 together coordinate (6S)-5-formyl-5,6,7,8-tetrahydrofolate. One can recognise a TrmE-type G domain in the interval 216-379 (GMTVVIAGRP…LRDHLKGCMG (164 aa)). K(+) is bound at residue Asn226. GTP is bound by residues 226 to 231 (NAGKSS), 245 to 251 (TDIAGTT), 270 to 273 (DTAG), and 335 to 338 (NKAD). Ser230 contacts Mg(2+). 3 residues coordinate K(+): Thr245, Ile247, and Thr250. Thr251 contributes to the Mg(2+) binding site. Residue Lys456 participates in (6S)-5-formyl-5,6,7,8-tetrahydrofolate binding.

Belongs to the TRAFAC class TrmE-Era-EngA-EngB-Septin-like GTPase superfamily. TrmE GTPase family. As to quaternary structure, homodimer. Heterotetramer of two MnmE and two MnmG subunits. Requires K(+) as cofactor.

Its subcellular location is the cytoplasm. In terms of biological role, exhibits a very high intrinsic GTPase hydrolysis rate. Involved in the addition of a carboxymethylaminomethyl (cmnm) group at the wobble position (U34) of certain tRNAs, forming tRNA-cmnm(5)s(2)U34. This chain is tRNA modification GTPase MnmE, found in Pseudomonas putida (strain ATCC 47054 / DSM 6125 / CFBP 8728 / NCIMB 11950 / KT2440).